Consider the following 139-residue polypeptide: Histone H2B.11 (139 aa).

Over residues 1 to 39 the composition is skewed to basic and acidic residues; that stretch reads MAPKAEKKPAEKKPVEEKAEKKPKAEKRVPGAKEGGGEK. The interval 1–47 is disordered; the sequence is MAPKAEKKPAEKKPVEEKAEKKPKAEKRVPGAKEGGGEKKGKKKAKK. N6-acetyllysine is present on residues Lys-7 and Lys-27. Lys-135 is covalently cross-linked (Glycyl lysine isopeptide (Lys-Gly) (interchain with G-Cter in ubiquitin)).

It belongs to the histone H2B family. The nucleosome is a histone octamer containing two molecules each of H2A, H2B, H3 and H4 assembled in one H3-H4 heterotetramer and two H2A-H2B heterodimers. The octamer wraps approximately 147 bp of DNA. Can be acetylated to form H2BK6ac and H2BK33ac. In terms of processing, monoubiquitinated by BRE1 to form H2BK143ub1 and deubiquitinated by UBP26. Required for heterochromatic histone H3 di- and trimethylation at H3K4me. May give a specific tag for epigenetic transcriptional activation.

It localises to the nucleus. It is found in the chromosome. In terms of biological role, core component of nucleosome. Nucleosomes wrap and compact DNA into chromatin, limiting DNA accessibility to the cellular machineries which require DNA as a template. Histones thereby play a central role in transcription regulation, DNA repair, DNA replication and chromosomal stability. DNA accessibility is regulated via a complex set of post-translational modifications of histones, also called histone code, and nucleosome remodeling. In Oryza sativa subsp. indica (Rice), this protein is Histone H2B.11 (H2B.11).